The primary structure comprises 452 residues: uncharacterized protein (452 aa).

Residues 3–61 (KVKIGEKYEVDITSMGHEGEGVGRIDGIAVFVKGALKGERVIVEIEEVHKNYLKGYTVK) form the TRAM domain. [4Fe-4S] cluster contacts are provided by Cys-74, Cys-80, Cys-83, and Cys-160. S-adenosyl-L-methionine contacts are provided by Gln-284, Tyr-313, Glu-334, and Asp-382. The active-site Nucleophile is the Cys-409.

Belongs to the class I-like SAM-binding methyltransferase superfamily. RNA M5U methyltransferase family.

This is an uncharacterized protein from Caldanaerobacter subterraneus subsp. tengcongensis (strain DSM 15242 / JCM 11007 / NBRC 100824 / MB4) (Thermoanaerobacter tengcongensis).